The primary structure comprises 288 residues: 18S rRNA aminocarboxypropyltransferase (288 aa).

S-adenosyl-L-methionine is bound by residues serine 43, valine 91, leucine 114, and tryptophan 129. The segment covering isoleucine 209–leucine 221 has biased composition (polar residues). Residues isoleucine 209–asparagine 267 form a disordered region. Positions asparagine 229–proline 253 are enriched in basic and acidic residues.

This sequence belongs to the TDD superfamily. TSR3 family.

It is found in the cytoplasm. The protein resides in the nucleus. It carries out the reaction an N(1)-methylpseudouridine in rRNA + S-adenosyl-L-methionine = N(1)-methyl-N(3)-[(3S)-3-amino-3-carboxypropyl]pseudouridine in rRNA + S-methyl-5'-thioadenosine + H(+). It catalyses the reaction N(1)-methylpseudouridine(1191) in yeast 18S rRNA + S-adenosyl-L-methionine = N(1)-methyl-N(3)-[(3S)-3-amino-3-carboxypropyl]pseudouridine(1191) in yeast 18S rRNA + S-methyl-5'-thioadenosine + H(+). Aminocarboxypropyltransferase that catalyzes the aminocarboxypropyl transfer on pseudouridine at position 1191 (Psi1191) in 18S rRNA. It constitutes the last step in biosynthesis of the hypermodified N1-methyl-N3-(3-amino-3-carboxypropyl) pseudouridine (m1acp3-Psi) conserved in eukaryotic 18S rRNA. Required for processing 35S pre-rRNA at site D. In Schizosaccharomyces pombe (strain 972 / ATCC 24843) (Fission yeast), this protein is 18S rRNA aminocarboxypropyltransferase.